The primary structure comprises 556 residues: Membrane protein insertase YidC (556 aa).

A helical transmembrane segment spans residues 7–27 (ILLVALAVVAYLMVLQWNQDY). Disordered stretches follow at residues 35–59 (ETAQ…GNAN) and 126–152 (SSER…PQYS). Low complexity predominate over residues 36–54 (TAQSQPAAPALPDSPSATT). Helical transmembrane passes span 365-385 (LLGN…LAFF), 435-455 (LGGC…YWVL), 468-488 (FWIT…IMGV), and 513-533 (PIIF…YWVV).

The protein belongs to the OXA1/ALB3/YidC family. Type 1 subfamily. As to quaternary structure, interacts with the Sec translocase complex via SecD. Specifically interacts with transmembrane segments of nascent integral membrane proteins during membrane integration.

Its subcellular location is the cell inner membrane. In terms of biological role, required for the insertion and/or proper folding and/or complex formation of integral membrane proteins into the membrane. Involved in integration of membrane proteins that insert both dependently and independently of the Sec translocase complex, as well as at least some lipoproteins. Aids folding of multispanning membrane proteins. The sequence is that of Membrane protein insertase YidC from Stutzerimonas stutzeri (strain A1501) (Pseudomonas stutzeri).